The following is a 134-amino-acid chain: Small ribosomal subunit protein uS8c (134 aa).

Belongs to the universal ribosomal protein uS8 family. Part of the 30S ribosomal subunit.

It localises to the plastid. The protein resides in the chloroplast. Functionally, one of the primary rRNA binding proteins, it binds directly to 16S rRNA central domain where it helps coordinate assembly of the platform of the 30S subunit. This chain is Small ribosomal subunit protein uS8c (rps8), found in Bigelowiella natans (Pedinomonas minutissima).